The following is a 178-amino-acid chain: Caveolin-1 (178 aa).

Residue S2 is modified to N-acetylserine. At S2 the chain carries Phosphoserine. The segment at 2–94 (SGGKYVDSEG…WKASFTTFTV (93 aa)) is required for homooligomerization. Residues 2 to 104 (SGGKYVDSEG…TKYWFYRLLS (103 aa)) lie on the Cytoplasmic side of the membrane. N6-acetyllysine; alternate is present on K5. A Glycyl lysine isopeptide (Lys-Gly) (interchain with G-Cter in ubiquitin); alternate cross-link involves residue K5. Phosphotyrosine is present on Y6. A Phosphoserine modification is found at S9. Y14 carries the phosphotyrosine; by ABL1 modification. Position 25 is a phosphotyrosine (Y25). Glycyl lysine isopeptide (Lys-Gly) (interchain with G-Cter in ubiquitin) cross-links involve residues K26 and K30. S37 is modified (phosphoserine). Residues K39, K47, and K57 each participate in a glycyl lysine isopeptide (Lys-Gly) (interchain with G-Cter in ubiquitin) cross-link. An interaction with CAVIN3 region spans residues 82–94 (DGIWKASFTTFTV). An intramembrane region (helical) is located at residues 105–125 (ALFGIPMALIWGIYFAILSFL). The Cytoplasmic segment spans residues 126–178 (HIWAVVPCIKSFLIEIQCISRVYSIYVHTFCDPFFEAVGKIFSNIRINMQKET). The segment at 131–142 (VPCIKSFLIEIQ) is interacts with SPRY1, SPRY2, SPRY3 and SPRY4. 3 S-palmitoyl cysteine lipidation sites follow: C133, C143, and C156. Residues 149 to 160 (SIYVHTFCDPFF) form an interacts with SPRY1, SPRY2, and SPRY4 region. The tract at residues 167 to 178 (FSNIRINMQKET) is interacts with SPRY1, SPRY2, SPRY3 and SPRY4.

This sequence belongs to the caveolin family. As to quaternary structure, homooligomer. Interacts with BMX, BTK, GLIPR2, NOSTRIN, SNAP25 and STX1A. Interacts with PACSIN2; this interaction induces membrane tubulation. Interacts (via the N-terminus) with DPP4; the interaction is direct. Interacts with SLC7A9. Interacts with CTNNB1, CDH1 and JUP. Interacts with TGFBR1. Interacts with CAVIN3 (via leucine-zipper domain) in a cholesterol-sensitive manner. Interacts with CAVIN1. Interacts with EHD2 in a cholesterol-dependent manner. Forms a ternary complex with UBXN6 and VCP; mediates CAV1 targeting to lysosomes for degradation. Interacts with ABCG1; this interaction regulates ABCG1-mediated cholesterol efflux. Interacts with NEU3; this interaction enhances NEU3 sialidase activity within caveola. Interacts (via C-terminus) with SPRY1, SPRY2 (via C-terminus), SPRY3, and SPRY4. Interacts with IGFBP5; this interaction allows trafficking of IGFBP5 from the plasma membrane to the nucleus. In terms of processing, phosphorylation of isoform Beta on serine residues is constitutive. Phosphorylated at Tyr-14 by ABL1 in response to oxidative stress. Ubiquitinated. Undergo monoubiquitination and multi- and/or polyubiquitination. Monoubiquitination of N-terminal lysines promotes integration in a ternary complex with UBXN6 and VCP which promotes oligomeric CAV1 targeting to lysosomes for degradation. Ubiquitinated by ZNRF1; leading to degradation and modulation of the TLR4-mediated immune response.

It localises to the golgi apparatus membrane. It is found in the cell membrane. The protein localises to the membrane. The protein resides in the caveola. Its subcellular location is the membrane raft. It localises to the golgi apparatus. It is found in the trans-Golgi network. Its function is as follows. May act as a scaffolding protein within caveolar membranes. Forms a stable heterooligomeric complex with CAV2 that targets to lipid rafts and drives caveolae formation. Mediates the recruitment of CAVIN proteins (CAVIN1/2/3/4) to the caveolae. Interacts directly with G-protein alpha subunits and can functionally regulate their activity. Involved in the costimulatory signal essential for T-cell receptor (TCR)-mediated T-cell activation. Its binding to DPP4 induces T-cell proliferation and NF-kappa-B activation in a T-cell receptor/CD3-dependent manner. Recruits CTNNB1 to caveolar membranes and may regulate CTNNB1-mediated signaling through the Wnt pathway. Negatively regulates TGFB1-mediated activation of SMAD2/3 by mediating the internalization of TGFBR1 from membrane rafts leading to its subsequent degradation. Binds 20(S)-hydroxycholesterol (20(S)-OHC). The chain is Caveolin-1 (CAV1) from Canis lupus familiaris (Dog).